Reading from the N-terminus, the 339-residue chain is Major pollen allergen Lol p 5b (339 aa).

An N-terminal signal peptide occupies residues 1–25 (MAVQKHTVALFLAVALVAGPAASYA). 9 consecutive repeat copies span residues 32-34 (PAT), 35-37 (PAT), 38-40 (PAA), 41-43 (PAT), 44-46 (AAT), 47-49 (PAT), 50-52 (PAT), 53-55 (PAT), and 56-58 (PAA). The tract at residues 32 to 58 (PATPATPAAPATAATPATPATPATPAA) is 9 X 3 AA tandem repeats of [PA]-A-[TA]. A compositionally biased stretch (low complexity) spans 36 to 58 (ATPAAPATAATPATPATPATPAA). Residues 36–65 (ATPAAPATAATPATPATPATPAAVPSGKAT) are disordered. Residues 285 to 290 (ATPAAA) form a 2-1; truncated repeat. Residues 285-334 (ATPAAAATATPTPAAATATATPAAAYATATPAAATATATPAAATATPAAA) form a 6 X 9 AA approximate tandem repeats of T-A-T-A-T-P-A-A-A region. 4 consecutive repeat copies span residues 292 to 300 (TATPTPAAA), 301 to 309 (TATATPAAA), 310 to 318 (YATATPAAA), and 319 to 327 (TATATPAAA). The 2-6; truncated repeat unit spans residues 328–334 (TATPAAA).

This sequence belongs to the Poa p IX/Phl p VI allergen family. As to expression, pollen, starch granules.

The protein is Major pollen allergen Lol p 5b of Lolium perenne (Perennial ryegrass).